Here is a 311-residue protein sequence, read N- to C-terminus: 5'-adenylylsulfate reductase-like 3 (311 aa).

The N-terminal stretch at 1-22 (MATRLLCWTALLLPIIAATAAA) is a signal peptide. One can recognise a Thioredoxin domain in the interval 23 to 164 (SPLPEACPVP…LAAFYRDVSG (142 aa)). Residue Asn139 is glycosylated (N-linked (GlcNAc...) asparagine). Residues 210–230 (LALATAFVILRLLYLLFPKIG) traverse the membrane as a helical segment. N-linked (GlcNAc...) asparagine glycosylation is found at Asn281 and Asn305.

The protein resides in the membrane. This Oryza sativa subsp. japonica (Rice) protein is 5'-adenylylsulfate reductase-like 3 (APRL3).